The sequence spans 896 residues: Bifunctional glutamine synthetase adenylyltransferase/adenylyl-removing enzyme (896 aa).

The segment at 1 to 411 (MSDNRLDTAR…LFNEILSEPE (411 aa)) is adenylyl removase. The tract at residues 417 to 896 (NSEWQWAWQD…EVFGEEAATV (480 aa)) is adenylyl transferase.

It belongs to the GlnE family. Mg(2+) is required as a cofactor.

It carries out the reaction [glutamine synthetase]-O(4)-(5'-adenylyl)-L-tyrosine + phosphate = [glutamine synthetase]-L-tyrosine + ADP. The catalysed reaction is [glutamine synthetase]-L-tyrosine + ATP = [glutamine synthetase]-O(4)-(5'-adenylyl)-L-tyrosine + diphosphate. In terms of biological role, involved in the regulation of glutamine synthetase GlnA, a key enzyme in the process to assimilate ammonia. When cellular nitrogen levels are high, the C-terminal adenylyl transferase (AT) inactivates GlnA by covalent transfer of an adenylyl group from ATP to specific tyrosine residue of GlnA, thus reducing its activity. Conversely, when nitrogen levels are low, the N-terminal adenylyl removase (AR) activates GlnA by removing the adenylyl group by phosphorolysis, increasing its activity. The regulatory region of GlnE binds the signal transduction protein PII (GlnB) which indicates the nitrogen status of the cell. This Neisseria meningitidis serogroup B (strain ATCC BAA-335 / MC58) protein is Bifunctional glutamine synthetase adenylyltransferase/adenylyl-removing enzyme.